A 198-amino-acid polypeptide reads, in one-letter code: KinB-signaling pathway activation protein (198 aa).

6 consecutive transmembrane segments (helical) span residues 9–29 (FFFS…FALK), 42–62 (AGQI…FSVI), 90–110 (LQLF…FLFF), 117–137 (LAGY…TAYI), 146–166 (TFVS…FPAL), and 173–193 (WLYL…LMLP).

The protein resides in the cell membrane. Its function is as follows. Involved in the activation of the KinB signaling pathway of sporulation. The polypeptide is KinB-signaling pathway activation protein (kbaA) (Bacillus subtilis (strain 168)).